A 276-amino-acid chain; its full sequence is Rhamnulose-1-phosphate aldolase (276 aa).

Glu117 is an active-site residue. Residues His141, His143, and His212 each coordinate Zn(2+).

This sequence belongs to the aldolase class II family. RhaD subfamily. In terms of assembly, homotetramer. Zn(2+) serves as cofactor.

It is found in the cytoplasm. The enzyme catalyses L-rhamnulose 1-phosphate = (S)-lactaldehyde + dihydroxyacetone phosphate. The protein operates within carbohydrate degradation; L-rhamnose degradation; glycerone phosphate from L-rhamnose: step 3/3. Its function is as follows. Catalyzes the reversible cleavage of L-rhamnulose-1-phosphate to dihydroxyacetone phosphate (DHAP) and L-lactaldehyde. The sequence is that of Rhamnulose-1-phosphate aldolase from Enterobacter sp. (strain 638).